A 1056-amino-acid polypeptide reads, in one-letter code: Ribosomal protein S6 kinase delta-1 (1056 aa).

Residues Ser-8–Asp-132 enclose the PX domain. Residues Val-204–Ser-223 are disordered. The segment covering Glu-212–Arg-222 has biased composition (basic and acidic residues). The region spanning Val-276–Ser-304 is the MIT domain. Phosphoserine occurs at positions 281, 422, 423, 426, 446, 448, and 454. In terms of domain architecture, Protein kinase 1 spans Gly-343 to Gln-444. Positions Ser-426 to Glu-504 are disordered. Residues Gln-443–Ser-454 are compositionally biased toward low complexity. Polar residues predominate over residues Thr-473 to Asp-482. Ser-493 and Ser-527 each carry phosphoserine. Residues Ser-529–Lys-588 form a disordered region. Residues Gln-544–Thr-561 are compositionally biased toward polar residues. The segment covering Ser-576–Ser-587 has biased composition (low complexity). Residues Ser-577, Ser-599, Ser-602, Ser-634, Ser-655, Ser-658, Ser-661, and Ser-787 each carry the phosphoserine modification. Residues Thr-628–Val-662 are disordered. The region spanning Arg-789–Phe-1046 is the Protein kinase 2 domain. ATP is bound by residues Leu-795–Thr-803 and Lys-823. Asp-919 acts as the Proton acceptor in catalysis.

Belongs to the protein kinase superfamily. Ser/Thr protein kinase family. S6 kinase subfamily. Interacts with SPHK1 and phosphatidylinositol 3-phosphate. Interacts (via PX domain) with PRDX3.

The protein localises to the cytoplasm. It localises to the membrane. The protein resides in the early endosome. The catalysed reaction is L-seryl-[protein] + ATP = O-phospho-L-seryl-[protein] + ADP + H(+). It carries out the reaction L-threonyl-[protein] + ATP = O-phospho-L-threonyl-[protein] + ADP + H(+). May be involved in transmitting sphingosine-1 phosphate (SPP)-mediated signaling into the cell. Plays a role in the recruitment of PRDX3 to early endosomes. This is Ribosomal protein S6 kinase delta-1 (Rps6kc1) from Mus musculus (Mouse).